The following is a 503-amino-acid chain: MSQLKLEEISSVIEEKIKNFELDCDMAEVGKVVSYADGVAKIYGLNGVMSYEVLEFETGDKGVAANLEEDSVGVIVFGFGNNIKEGTSVKRTKSLMKVPVGDAVVGRVLNALGEPIDGKGEIETNEFSLIEQKAPGIMDRKSVHEPLQTGIKAIDALVPIGRGQRELIIGDKQTGKTTVAIDTIINQKGQNVICIYVAIGQKESTVAQVVRKLEEYGAMEYSVVVNASASDSAAMQYLAPYAGVAMGEYFRDHARHALIIYDDLSKHAVAYREISLILRRPPGREAFPGDVFYIHSRLLERAAKVCDEKGAGSLTALPIVETQAGDVSAYIPTNIISITDGQIFLETDLFYSGIRPAINVGLSVSRVGGAAQIKATKQVSGTLRLDLAQYRELQAFTQFASDLDEASKKQLERGQRMVEVLKQAPYSPLPIEKQVVIIYAGAKGFLDSVSVKKVVDFEERLYPFLEAKYPQVLEEIHIKKALDKDLEAMLKKALEEFKLTYSE.

170–177 serves as a coordination point for ATP; that stretch reads GDKQTGKT.

The protein belongs to the ATPase alpha/beta chains family. As to quaternary structure, F-type ATPases have 2 components, CF(1) - the catalytic core - and CF(0) - the membrane proton channel. CF(1) has five subunits: alpha(3), beta(3), gamma(1), delta(1), epsilon(1). CF(0) has three main subunits: a(1), b(2) and c(9-12). The alpha and beta chains form an alternating ring which encloses part of the gamma chain. CF(1) is attached to CF(0) by a central stalk formed by the gamma and epsilon chains, while a peripheral stalk is formed by the delta and b chains.

It localises to the cell inner membrane. It carries out the reaction ATP + H2O + 4 H(+)(in) = ADP + phosphate + 5 H(+)(out). Its function is as follows. Produces ATP from ADP in the presence of a proton gradient across the membrane. The alpha chain is a regulatory subunit. In Helicobacter acinonychis (strain Sheeba), this protein is ATP synthase subunit alpha.